Consider the following 154-residue polypeptide: Myoglobin (154 aa).

The Globin domain occupies 2–148; it reads GLSDGEWQLV…FRKDMASNYK (147 aa). Ser-4 is subject to Phosphoserine. His-65 provides a ligand contact to nitrite. Residue His-65 coordinates O2. Residue Thr-68 is modified to Phosphothreonine. His-94 is a binding site for heme b.

The protein belongs to the globin family. Monomeric.

It is found in the cytoplasm. The protein localises to the sarcoplasm. The enzyme catalyses Fe(III)-heme b-[protein] + nitric oxide + H2O = Fe(II)-heme b-[protein] + nitrite + 2 H(+). It carries out the reaction H2O2 + AH2 = A + 2 H2O. Functionally, monomeric heme protein which primary function is to store oxygen and facilitate its diffusion within muscle tissues. Reversibly binds oxygen through a pentacoordinated heme iron and enables its timely and efficient release as needed during periods of heightened demand. Depending on the oxidative conditions of tissues and cells, and in addition to its ability to bind oxygen, it also has a nitrite reductase activity whereby it regulates the production of bioactive nitric oxide. Under stress conditions, like hypoxia and anoxia, it also protects cells against reactive oxygen species thanks to its pseudoperoxidase activity. In Pan troglodytes (Chimpanzee), this protein is Myoglobin (MB).